The chain runs to 324 residues: Polycomb complex protein BMI-1-B (324 aa).

The RING-type zinc finger occupies 18–57 (CVLCGGYFIDATTIVECLHSFCKMCIVRYLETSKYCPICD). The Nuclear localization signal signature appears at 81–95 (KLVPGLFKNEMKRRR). The interval 232-324 (IKLSSPRNDM…TSHNGSNSLG (93 aa)) is disordered. Positions 256–279 (DKPNSPSIVAAPSTSSSMPSPNTP) are enriched in low complexity. Composition is skewed to polar residues over residues 280–295 (VQSTHPSFPHISTING) and 303–324 (NGQTPFSSKVCKTSHNGSNSLG).

Component of a PRC1-like complex. Homodimer. Interacts with cbx2.

It localises to the nucleus. Component of a Polycomb group (PcG) multiprotein PRC1-like complex, a complex class required to maintain the transcriptionally repressive state of many genes, including Hox genes, throughout development. PcG PRC1 complex acts via chromatin remodeling and modification of histones; it mediates monoubiquitination of histone H2A 'Lys-119', rendering chromatin heritably changed in its expressibility. In the PRC1 complex, it is required to stimulate the E3 ubiquitin-protein ligase activity of rnf2. This Danio rerio (Zebrafish) protein is Polycomb complex protein BMI-1-B (bmi1b).